The following is a 458-amino-acid chain: Probable alpha-L-glutamate ligase (458 aa).

The segment at 1 to 162 (MSDNKFIIGS…YGVKSAKKSG (162 aa)) is unknown. The segment at 163 to 458 (LKIGLLASNP…IEKKLGWKAE (296 aa)) is alpha-L-glutamate ligase. In terms of domain architecture, ATP-grasp spans 267 to 450 (LQLLQKNNLD…IAGAMIDSIE (184 aa)). Residues lysine 304, 341-342 (EF), aspartate 350, and 374-376 (RAN) each bind ATP. Mg(2+) contacts are provided by aspartate 411, glutamate 423, and asparagine 425. Mn(2+) is bound by residues aspartate 411, glutamate 423, and asparagine 425.

It in the C-terminal section; belongs to the RimK family. Mg(2+) serves as cofactor. Mn(2+) is required as a cofactor.

The protein is Probable alpha-L-glutamate ligase of Shewanella halifaxensis (strain HAW-EB4).